We begin with the raw amino-acid sequence, 359 residues long: Serpentine receptor class epsilon-13 (359 aa).

7 consecutive transmembrane segments (helical) span residues 33 to 53 (YLFV…YYLL), 74 to 94 (AIYL…ILLI), 111 to 131 (ISLF…AFVA), 150 to 170 (WLVG…ALDF), 180 to 200 (VTIF…NFLL), 237 to 257 (LALS…IDNL), and 266 to 286 (LNTV…PFVI).

Belongs to the nematode receptor-like protein sre family.

The protein resides in the membrane. This Caenorhabditis elegans protein is Serpentine receptor class epsilon-13 (sre-13).